We begin with the raw amino-acid sequence, 556 residues long: Undecaprenyl phosphate-alpha-4-amino-4-deoxy-L-arabinose arabinosyl transferase (556 aa).

10 consecutive transmembrane segments (helical) span residues 88–108 (FASV…AMML), 116–136 (LLAA…TYSV), 179–199 (FMTK…PVAL), 207–227 (LLLF…PWAL), 258–278 (APFW…LALL), 296–316 (FFLL…KGKL), 319–339 (YILP…SGLA), 355–375 (IVFG…IIVP), 384–404 (LTII…AVSL), and 410–430 (WGYL…GSIP).

This sequence belongs to the glycosyltransferase 83 family.

The protein resides in the cell inner membrane. It catalyses the reaction 4-amino-4-deoxy-alpha-L-arabinopyranosyl di-trans,octa-cis-undecaprenyl phosphate + lipid IVA = lipid IIA + di-trans,octa-cis-undecaprenyl phosphate.. The protein operates within lipopolysaccharide metabolism; 4-amino-4-deoxy-beta-L-arabinose-lipid A biosynthesis. In terms of biological role, catalyzes the transfer of the L-Ara4N moiety of the glycolipid undecaprenyl phosphate-alpha-L-Ara4N to lipid A. The modified arabinose is attached to lipid A and is required for resistance to polymyxin and cationic antimicrobial peptides. The sequence is that of Undecaprenyl phosphate-alpha-4-amino-4-deoxy-L-arabinose arabinosyl transferase from Pectobacterium atrosepticum (strain SCRI 1043 / ATCC BAA-672) (Erwinia carotovora subsp. atroseptica).